We begin with the raw amino-acid sequence, 202 residues long: Hypoxanthine-guanine phosphoribosyltransferase (202 aa).

Positions 66 and 67 each coordinate diphosphate. Residues Glu122 and Asp123 each coordinate Mg(2+). Catalysis depends on Asp126, which acts as the Proton acceptor. GMP-binding positions include Lys154, 175 to 176, and Asp182; that span reads FV. Residue Arg188 participates in diphosphate binding.

The protein belongs to the purine/pyrimidine phosphoribosyltransferase family. In terms of assembly, homodimer and homotetramer in equilibrium. The presence or absence of divalent metal ions, as well as phosphate, can affect the oligomerization state of the enzyme. Likely functions as a tetramer (rather than a dimer) in its biological environment, which is the most active form. The dimeric structure is also active though ~50% of that of the tetramer. It depends on Mg(2+) as a cofactor.

The protein localises to the cytoplasm. It catalyses the reaction IMP + diphosphate = hypoxanthine + 5-phospho-alpha-D-ribose 1-diphosphate. The enzyme catalyses GMP + diphosphate = guanine + 5-phospho-alpha-D-ribose 1-diphosphate. It participates in purine metabolism; IMP biosynthesis via salvage pathway; IMP from hypoxanthine: step 1/1. The protein operates within purine metabolism; GMP biosynthesis via salvage pathway; GMP from guanine: step 1/1. Competitively inhibited by acyclic nucleoside phosphonates (ANPs) with Ki values as low as 0.69 uM. Prodrugs of these compounds arrest the growth of a virulent strain of M.tuberculosis with MIC50 values as low as 4.5 uM and possess low cytotoxicity in mammalian cells. Inhibited by pyrrolidine nucleoside bisphosphonates, which are also able to arrest the growth of virulent M.tuberculosis not only in its replicating phase but also in its latent phase, and to arrest the growth of M.tuberculosis in infected macrophages while having low cytotoxicity in mammalian cells. In terms of biological role, purine salvage pathway enzyme that catalyzes the transfer of the ribosyl-5-phosphate group from 5-phospho-alpha-D-ribose 1-diphosphate (PRPP) to the N9 position of the 6-oxopurines hypoxanthine and guanine to form the corresponding ribonucleotides IMP (inosine 5'-monophosphate) and GMP (guanosine 5'-monophosphate), with the release of PPi. Thus, specifically recycles hypoxanthine and guanine imported from the external medium, and converts them to IMP and GMP, respectively. Cannot use xanthine as substrate. The sequence is that of Hypoxanthine-guanine phosphoribosyltransferase from Mycobacterium tuberculosis (strain ATCC 25618 / H37Rv).